Here is a 504-residue protein sequence, read N- to C-terminus: NADH-quinone oxidoreductase subunit N (504 aa).

14 consecutive transmembrane segments (helical) span residues 9 to 29 (IALL…LSII), 38 to 58 (AVLT…HMMW), 78 to 98 (VLYV…GYVW), 114 to 134 (LLIA…IVLF), 135 to 155 (LGIE…VFSK), 164 to 184 (YIIL…FIYC), 216 to 236 (IVIG…CVPF), 254 to 274 (YLAT…LLIL), 282 to 302 (LHIF…LMAI), 309 to 329 (RMLA…LIAL), 341 to 361 (ISVY…IVNI), 392 to 412 (VIFV…GFIG), 425 to 447 (LWFL…LKII), and 476 to 496 (FMVI…QFIV).

This sequence belongs to the complex I subunit 2 family. NDH-1 is composed of 13 different subunits. Subunits NuoA, H, J, K, L, M, N constitute the membrane sector of the complex.

The protein localises to the cell inner membrane. It carries out the reaction a quinone + NADH + 5 H(+)(in) = a quinol + NAD(+) + 4 H(+)(out). Functionally, NDH-1 shuttles electrons from NADH, via FMN and iron-sulfur (Fe-S) centers, to quinones in the respiratory chain. The immediate electron acceptor for the enzyme in this species is believed to be ubiquinone. Couples the redox reaction to proton translocation (for every two electrons transferred, four hydrogen ions are translocated across the cytoplasmic membrane), and thus conserves the redox energy in a proton gradient. This chain is NADH-quinone oxidoreductase subunit N, found in Blochmanniella floridana.